A 704-amino-acid chain; its full sequence is DNA ligase (704 aa).

NAD(+) is bound by residues 43 to 47, 92 to 93, and glutamate 124; these read DADYD and SL. The active-site N6-AMP-lysine intermediate is the lysine 126. Arginine 147, glutamate 182, lysine 298, and lysine 322 together coordinate NAD(+). The Zn(2+) site is built by cysteine 427, cysteine 430, cysteine 445, and cysteine 451. In terms of domain architecture, BRCT spans 625 to 704; it reads PVASPVAGKI…DGWLRLIGDA (80 aa).

This sequence belongs to the NAD-dependent DNA ligase family. LigA subfamily. Mg(2+) serves as cofactor. The cofactor is Mn(2+).

The catalysed reaction is NAD(+) + (deoxyribonucleotide)n-3'-hydroxyl + 5'-phospho-(deoxyribonucleotide)m = (deoxyribonucleotide)n+m + AMP + beta-nicotinamide D-nucleotide.. DNA ligase that catalyzes the formation of phosphodiester linkages between 5'-phosphoryl and 3'-hydroxyl groups in double-stranded DNA using NAD as a coenzyme and as the energy source for the reaction. It is essential for DNA replication and repair of damaged DNA. The chain is DNA ligase from Cereibacter sphaeroides (strain ATCC 17023 / DSM 158 / JCM 6121 / CCUG 31486 / LMG 2827 / NBRC 12203 / NCIMB 8253 / ATH 2.4.1.) (Rhodobacter sphaeroides).